A 177-amino-acid polypeptide reads, in one-letter code: Nucleoside triphosphate/diphosphate phosphatase (177 aa).

Arginine 23 functions as the Proton donor in the catalytic mechanism. Positions 87, 103, 105, 107, 120, and 123 each coordinate Mg(2+).

Belongs to the Ntdp family. Requires Mg(2+) as cofactor.

The enzyme catalyses a ribonucleoside 5'-triphosphate + H2O = a ribonucleoside 5'-diphosphate + phosphate + H(+). It catalyses the reaction a ribonucleoside 5'-diphosphate + H2O = a ribonucleoside 5'-phosphate + phosphate + H(+). Functionally, has nucleoside phosphatase activity towards nucleoside triphosphates and nucleoside diphosphates. The protein is Nucleoside triphosphate/diphosphate phosphatase of Streptococcus mutans serotype c (strain ATCC 700610 / UA159).